Consider the following 449-residue polypeptide: Naphthalene 1,2-dioxygenase system, large oxygenase component (449 aa).

The 99-residue stretch at 39-137 (WLFLTHDSLI…LNKKCLGLKE (99 aa)) folds into the Rieske domain. [2Fe-2S] cluster-binding residues include Cys-81, His-83, Cys-101, and His-104. 3 residues coordinate Fe cation: His-208, His-213, and Asp-362.

Belongs to the bacterial ring-hydroxylating dioxygenase alpha subunit family. As to quaternary structure, the naphthalene dioxygenase (NDO) multicomponent enzyme system is composed of an electron transfer component and a dioxygenase component (iron sulfur protein (ISP)). The electron transfer component is composed of a ferredoxin reductase (NdoR) and a ferredoxin (NdoA), and the dioxygenase component is formed of a heterohexamer (trimer of heterodimers) of three large alpha subunits (NdoB) and three small beta subunits (NdoC). [2Fe-2S] cluster is required as a cofactor. It depends on Fe(2+) as a cofactor.

The enzyme catalyses naphthalene + NADH + O2 + H(+) = (1R,2S)-1,2-dihydronaphthalene-1,2-diol + NAD(+). The protein operates within aromatic compound metabolism; naphthalene degradation. Component of the naphthalene dioxygenase (NDO) multicomponent enzyme system which catalyzes the incorporation of both atoms of molecular oxygen into naphthalene to form cis-(1R,2S)-dihydroxy-1,2-dihydronaphthalene. The alpha subunit has a catalytic role in the holoenzyme. This is Naphthalene 1,2-dioxygenase system, large oxygenase component from Pseudomonas fluorescens.